We begin with the raw amino-acid sequence, 289 residues long: Ribosomal RNA small subunit methyltransferase I (289 aa).

Belongs to the methyltransferase superfamily. RsmI family.

It is found in the cytoplasm. The catalysed reaction is cytidine(1402) in 16S rRNA + S-adenosyl-L-methionine = 2'-O-methylcytidine(1402) in 16S rRNA + S-adenosyl-L-homocysteine + H(+). In terms of biological role, catalyzes the 2'-O-methylation of the ribose of cytidine 1402 (C1402) in 16S rRNA. In Helicobacter pylori (strain J99 / ATCC 700824) (Campylobacter pylori J99), this protein is Ribosomal RNA small subunit methyltransferase I.